A 574-amino-acid polypeptide reads, in one-letter code: Interleukin-22 receptor subunit alpha-1 (574 aa).

The signal sequence occupies residues 1-15 (MRTLLTILTVGSLAA). The Extracellular segment spans residues 16–228 (HAPEDPSDLL…VKTLPDRTWT (213 aa)). Fibronectin type-III domains lie at 17-124 (APED…LKPP) and 141-221 (PTPT…RVKT). Residues C71 and C79 are joined by a disulfide bond. N-linked (GlcNAc...) asparagine glycosylation is found at N80 and N172. C128 and C217 are joined by a disulfide. A helical transmembrane segment spans residues 229-249 (YSFSGAFLFSMGFLVAVLCYL). Residues 250–574 (SYRYVTKPPA…GLALTVQWES (325 aa)) lie on the Cytoplasmic side of the membrane. Disordered regions lie at residues 388–440 (SSYA…AGSC), 454–489 (AMEESQEAKSLHQPLGICTDRTSDPNVLHSGEEGTP), and 507–560 (HPMS…TELD). Residues S410 and S414 each carry the phosphoserine modification.

This sequence belongs to the type II cytokine receptor family. Heterodimer with IL10RB and with IL20RB. IL22 binding to heterodimer is greater than binding to IL22RA1 alone. Interacts with FBXW12; the interaction promotes ubiquitination of IL22RA1. Ubiquitinated. Expressed in colon, liver, lung, pancreas and kidney. No expression in immune cells such as monocytes, T-cells, and NK-cells. Expressed in keratinocytes of normal skin as well as in psoriatic skin lesion. Detected in normal blood brain barrier endothelial cells as well as in multiple sclerosis lesions; Strongly expressed on central nervous system vessels within infiltrated multiple sclerosis lesions. Overexpressed in synovial fluid cells from rheumatoid arthritis and spondyloarthropathy patients.

The protein localises to the cell membrane. Functionally, component of the receptor for IL20, IL22 and IL24. Component of IL22 receptor formed by IL22RA1 and IL10RB enabling IL22 signaling via JAK/STAT pathways. IL22 also induces activation of MAPK1/MAPK3 and Akt kinases pathways. Component of one of the receptor for IL20 and IL24 formed by IL22RA1 and IL20RB also signaling through STATs activation. Mediates IL24 antiangiogenic activity as well as IL24 inhibitory effect on endothelial cell tube formation and differentiation. This chain is Interleukin-22 receptor subunit alpha-1 (IL22RA1), found in Homo sapiens (Human).